We begin with the raw amino-acid sequence, 873 residues long: DNA mismatch repair protein MutS (873 aa).

ATP is bound at residue 620 to 627; it reads GPNMAGKS.

Belongs to the DNA mismatch repair MutS family.

In terms of biological role, this protein is involved in the repair of mismatches in DNA. It is possible that it carries out the mismatch recognition step. This protein has a weak ATPase activity. This Ruminiclostridium cellulolyticum (strain ATCC 35319 / DSM 5812 / JCM 6584 / H10) (Clostridium cellulolyticum) protein is DNA mismatch repair protein MutS.